The primary structure comprises 461 residues: Protein-serine O-palmitoleoyltransferase porcupine (461 aa).

Residues 1 to 17 (MATFSRQEFFQQLLQGC) lie on the Cytoplasmic side of the membrane. Residues 18–38 (LLPTAQQGLDQIWLLLAICLA) form a helical membrane-spanning segment. The Extracellular portion of the chain corresponds to 39–66 (CRLLWRLGLPSYLKHASTVAGGFFSLYH). The chain crosses the membrane as a helical span at residues 67-87 (FFQLHMVWVVLLSLLCYLVLF). Residues 88–95 (LCRHSSHR) are Cytoplasmic-facing. Residues 96–116 (GVFLSVTILIYLLMGEMHMVD) form a helical membrane-spanning segment. At 117 to 152 (TVTWHKMRGAQMIVAMKAVSLGFDLDRGEVGTVPSP) the chain is on the extracellular side. The chain crosses the membrane as a helical span at residues 153–173 (VEFMGYLYFVGTIVFGPWISF). At 174–198 (HSYLQAVQGRPLSCRWLQKVARSLA) the chain is on the cytoplasmic side. Cysteine 187 carries S-palmitoyl cysteine lipidation. Residues 199 to 219 (LALLCLVLSTCVGPYLFPYFI) form a helical membrane-spanning segment. Topologically, residues 220–252 (PLNGDRLLRNKKRKARGTMVRWLRAYESAVSFH) are extracellular. A helical transmembrane segment spans residues 253 to 273 (FSNYFVGFLSEATATLAGAGF). Residues 274-337 (TEEKDHLEWD…SAVLVTYAAS (64 aa)) are Cytoplasmic-facing. The helical transmembrane segment at 338-358 (ALLHGFSFHLAAVLLSLAFIT) threads the bilayer. Histidine 341 is an active-site residue. Residues 359 to 396 (YVEHVLRKRLARILSACVLSKRCPPDCSHQHRLGLGVR) lie on the Extracellular side of the membrane. Residues 397-417 (ALNLLFGALAIFHLAYLGSLF) traverse the membrane as a helical segment. Topologically, residues 418 to 461 (DVDVDDTTEEQGYGMAYTVHKWSELSWASHWVTFGCWIFYRLIG) are cytoplasmic.

It belongs to the membrane-bound acyltransferase family. Porcupine subfamily. Interacts with WNT1, WNT3, WNT3A, WNT4, WNT5A, WNT5B, WNT6, WNT7A and WNT7B. As to expression, isoform 1 is expressed in fetal brain, brain, amygdala, caudate nucleus, cerebellum, hippocampus, pituitary, thalamus, heart, skeletal muscle and testis. Isoform 4 is expressed in amygdala, corpus callosum, hippocampus, spinal cord, kidney, liver, lung, spleen, uterus, testis. Isoform 2 and isoform 3 are expressed in substantia negra, spinal cord, heart and lung.

The protein localises to the endoplasmic reticulum membrane. The enzyme catalyses [Wnt protein]-L-serine + (9Z)-hexadecenoyl-CoA = [Wnt protein]-O-(9Z)-hexadecenoyl-L-serine + CoA. Protein-serine O-palmitoleoyltransferase that acts as a key regulator of the Wnt signaling pathway by mediating the attachment of palmitoleate, a 16-carbon monounsaturated fatty acid (C16:1(9Z)), to Wnt proteins. Serine palmitoleoylation of WNT proteins is required for efficient binding to frizzled receptors. This chain is Protein-serine O-palmitoleoyltransferase porcupine, found in Homo sapiens (Human).